The chain runs to 212 residues: 3-isopropylmalate dehydratase small subunit (212 aa).

It belongs to the LeuD family. LeuD type 1 subfamily. As to quaternary structure, heterodimer of LeuC and LeuD.

The enzyme catalyses (2R,3S)-3-isopropylmalate = (2S)-2-isopropylmalate. Its pathway is amino-acid biosynthesis; L-leucine biosynthesis; L-leucine from 3-methyl-2-oxobutanoate: step 2/4. Functionally, catalyzes the isomerization between 2-isopropylmalate and 3-isopropylmalate, via the formation of 2-isopropylmaleate. The sequence is that of 3-isopropylmalate dehydratase small subunit from Pseudomonas aeruginosa (strain UCBPP-PA14).